A 555-amino-acid polypeptide reads, in one-letter code: Suppressor of tumorigenicity 7 protein-like (555 aa).

Transmembrane regions (helical) follow at residues 32–52, 76–96, 504–524, and 531–551; these read APWA…YAAL, FYFA…VFEW, LPFF…LALL, and LMVV…APSV.

The protein belongs to the ST7 family.

The protein localises to the membrane. This is Suppressor of tumorigenicity 7 protein-like (ST7L) from Gallus gallus (Chicken).